Consider the following 82-residue polypeptide: Small ribosomal subunit protein bS16 (82 aa).

The protein belongs to the bacterial ribosomal protein bS16 family.

The sequence is that of Small ribosomal subunit protein bS16 from Glaesserella parasuis serovar 5 (strain SH0165) (Haemophilus parasuis).